The chain runs to 512 residues: Glycerol kinase 2 (512 aa).

Threonine 18 contacts ADP. Residues threonine 18, threonine 19, and serine 20 each contribute to the ATP site. Threonine 18 contributes to the sn-glycerol 3-phosphate binding site. Arginine 22 lines the ADP pocket. Sn-glycerol 3-phosphate contacts are provided by arginine 88, glutamate 89, tyrosine 140, and aspartate 255. Arginine 88, glutamate 89, tyrosine 140, aspartate 255, and glutamine 256 together coordinate glycerol. 2 residues coordinate ADP: threonine 277 and glycine 321. Residues threonine 277, glycine 321, glutamine 325, and glycine 422 each coordinate ATP. ADP is bound by residues glycine 422 and asparagine 426.

Belongs to the FGGY kinase family.

The enzyme catalyses glycerol + ATP = sn-glycerol 3-phosphate + ADP + H(+). It functions in the pathway polyol metabolism; glycerol degradation via glycerol kinase pathway; sn-glycerol 3-phosphate from glycerol: step 1/1. With respect to regulation, inhibited by fructose 1,6-bisphosphate (FBP). Functionally, key enzyme in the regulation of glycerol uptake and metabolism. Catalyzes the phosphorylation of glycerol to yield sn-glycerol 3-phosphate. This is Glycerol kinase 2 from Streptomyces coelicolor (strain ATCC BAA-471 / A3(2) / M145).